A 538-amino-acid polypeptide reads, in one-letter code: Nicotinate phosphoribosyltransferase (538 aa).

Nicotinate-binding residues include Tyr-21 and Thr-210. His-213 carries the post-translational modification Phosphohistidine. Arg-318 is a nicotinate binding site. Thr-380 lines the 5-phospho-alpha-D-ribose 1-diphosphate pocket. Position 537 is a phosphoserine (Ser-537).

Belongs to the NAPRTase family. In terms of assembly, homodimer. Mg(2+) serves as cofactor. Mn(2+) is required as a cofactor. Transiently phosphorylated on a His residue during the reaction cycle. Phosphorylation strongly increases the affinity for substrates and increases the rate of nicotinate D-ribonucleotide production. Dephosphorylation regenerates the low-affinity form of the enzyme, leading to product release.

Its subcellular location is the cytoplasm. The protein resides in the cytosol. It carries out the reaction nicotinate + 5-phospho-alpha-D-ribose 1-diphosphate + ATP + H2O = nicotinate beta-D-ribonucleotide + ADP + phosphate + diphosphate. It functions in the pathway cofactor biosynthesis; NAD(+) biosynthesis; nicotinate D-ribonucleotide from nicotinate: step 1/1. Its function is as follows. Catalyzes the first step in the biosynthesis of NAD from nicotinic acid, the ATP-dependent synthesis of beta-nicotinate D-ribonucleotide from nicotinate and 5-phospho-D-ribose 1-phosphate. Helps prevent cellular oxidative stress via its role in NAD biosynthesis. This chain is Nicotinate phosphoribosyltransferase (NAPRT), found in Homo sapiens (Human).